The chain runs to 257 residues: Succinate dehydrogenase subunit 5, mitochondrial (257 aa).

A mitochondrion-targeting transit peptide spans 1–89 (MGTLGRAIHT…AMGMGQVRRF (89 aa)).

As to quaternary structure, component of complex II composed of eight subunits in plants: four classical SDH subunits SDH1, SDH2, SDH3 and SDH4 (a flavoprotein (FP), an iron-sulfur protein (IP), and a cytochrome b composed of a large and a small subunit.), as well as four subunits unknown in mitochondria from bacteria and heterotrophic eukaryotes.

The protein resides in the mitochondrion inner membrane. It functions in the pathway carbohydrate metabolism; tricarboxylic acid cycle. This is Succinate dehydrogenase subunit 5, mitochondrial from Arabidopsis thaliana (Mouse-ear cress).